The primary structure comprises 589 residues: 2-succinyl-5-enolpyruvyl-6-hydroxy-3-cyclohexene-1-carboxylate synthase (589 aa).

A disordered region spans residues 198–222; it reads DAATTEGAHDSHAPSQPTRGPRKLP.

The protein belongs to the TPP enzyme family. MenD subfamily. As to quaternary structure, homodimer. The cofactor is Mg(2+). Mn(2+) serves as cofactor. Thiamine diphosphate is required as a cofactor.

It catalyses the reaction isochorismate + 2-oxoglutarate + H(+) = 5-enolpyruvoyl-6-hydroxy-2-succinyl-cyclohex-3-ene-1-carboxylate + CO2. Its pathway is quinol/quinone metabolism; 1,4-dihydroxy-2-naphthoate biosynthesis; 1,4-dihydroxy-2-naphthoate from chorismate: step 2/7. It participates in quinol/quinone metabolism; menaquinone biosynthesis. Functionally, catalyzes the thiamine diphosphate-dependent decarboxylation of 2-oxoglutarate and the subsequent addition of the resulting succinic semialdehyde-thiamine pyrophosphate anion to isochorismate to yield 2-succinyl-5-enolpyruvyl-6-hydroxy-3-cyclohexene-1-carboxylate (SEPHCHC). The chain is 2-succinyl-5-enolpyruvyl-6-hydroxy-3-cyclohexene-1-carboxylate synthase from Corynebacterium jeikeium (strain K411).